A 760-amino-acid chain; its full sequence is Xaa-Pro dipeptidyl-peptidase (760 aa).

Catalysis depends on charge relay system residues S349, D469, and H499.

It belongs to the peptidase S15 family. In terms of assembly, homodimer.

The protein localises to the cytoplasm. The catalysed reaction is Hydrolyzes Xaa-Pro-|- bonds to release unblocked, N-terminal dipeptides from substrates including Ala-Pro-|-p-nitroanilide and (sequentially) Tyr-Pro-|-Phe-Pro-|-Gly-Pro-|-Ile.. Removes N-terminal dipeptides sequentially from polypeptides having unsubstituted N-termini provided that the penultimate residue is proline. The chain is Xaa-Pro dipeptidyl-peptidase from Streptococcus pyogenes serotype M2 (strain MGAS10270).